The following is a 178-amino-acid chain: MDKRSYATVEKYAAPFVQIVLEKNQQRDVFRELSQIKGIFEETYLADFLSHIGVSQAEKSKVLRLFQTCDSVLVNNLIEVLIKNGREDFFYPILLDILKKIEKETNEFEVTIHSVEGLSEEQKARLIPVIEKKMNLKVRSIKENLDRSLIGGFAITANHKIIDTSIKRQLKAVKEKLK.

This sequence belongs to the ATPase delta chain family. As to quaternary structure, F-type ATPases have 2 components, F(1) - the catalytic core - and F(0) - the membrane proton channel. F(1) has five subunits: alpha(3), beta(3), gamma(1), delta(1), epsilon(1). F(0) has three main subunits: a(1), b(2) and c(10-14). The alpha and beta chains form an alternating ring which encloses part of the gamma chain. F(1) is attached to F(0) by a central stalk formed by the gamma and epsilon chains, while a peripheral stalk is formed by the delta and b chains.

It localises to the cell membrane. Its function is as follows. F(1)F(0) ATP synthase produces ATP from ADP in the presence of a proton or sodium gradient. F-type ATPases consist of two structural domains, F(1) containing the extramembraneous catalytic core and F(0) containing the membrane proton channel, linked together by a central stalk and a peripheral stalk. During catalysis, ATP synthesis in the catalytic domain of F(1) is coupled via a rotary mechanism of the central stalk subunits to proton translocation. Functionally, this protein is part of the stalk that links CF(0) to CF(1). It either transmits conformational changes from CF(0) to CF(1) or is implicated in proton conduction. The chain is ATP synthase subunit delta from Streptococcus gordonii (strain Challis / ATCC 35105 / BCRC 15272 / CH1 / DL1 / V288).